Consider the following 77-residue polypeptide: Putative antitoxin MazE7 (77 aa).

Positions 49 to 77 (REASHAETTTQAVRDEDREWEGTVGDGLG) are disordered.

Forms a complex with cognate toxin MazF7.

Functionally, antitoxin component of a type II toxin-antitoxin (TA) system. In Mycobacterium tuberculosis (strain CDC 1551 / Oshkosh), this protein is Putative antitoxin MazE7 (mazE7).